We begin with the raw amino-acid sequence, 167 residues long: tRNA-specific adenosine deaminase (167 aa).

Residues 6-117 (FSHEYWMRHA…DAKTGAAGSL (112 aa)) enclose the CMP/dCMP-type deaminase domain. His-57 lines the Zn(2+) pocket. Glu-59 serves as the catalytic Proton donor. Positions 87 and 90 each coordinate Zn(2+).

Belongs to the cytidine and deoxycytidylate deaminase family. Homodimer. Zn(2+) is required as a cofactor.

It catalyses the reaction adenosine(34) in tRNA + H2O + H(+) = inosine(34) in tRNA + NH4(+). Catalyzes the deamination of adenosine to inosine at the wobble position 34 of tRNA(Arg2). This is tRNA-specific adenosine deaminase from Escherichia coli O157:H7.